The following is a 59-amino-acid chain: Insulin (59 aa).

Intrachain disulfides connect cysteine 7–cysteine 45, cysteine 19–cysteine 58, and cysteine 44–cysteine 49.

Belongs to the insulin family. In terms of assembly, heterodimer of a B chain and an A chain linked by two disulfide bonds.

The protein localises to the secreted. Its function is as follows. Insulin decreases blood glucose concentration. It increases cell permeability to monosaccharides, amino acids and fatty acids. It accelerates glycolysis, the pentose phosphate cycle, and glycogen synthesis in liver. This Chimaera monstrosa (Rabbit fish) protein is Insulin (ins).